The following is a 360-amino-acid chain: Nucleoporin SEH1 (360 aa).

WD repeat units lie at residues 10 to 49 (DHKD…DWHC), 55 to 96 (THSG…SNDK), 111 to 152 (DSRT…NLSQ), 160 to 210 (SCKL…RKYA), 217 to 258 (SVSD…KELS), and 276 to 315 (NHNS…NWKC).

It belongs to the WD repeat SEC13 family. Component of the Nup107-160 subcomplex of the nuclear pore complex (NPC). The Nup107-160 subcomplex includes NUP160, NUP133, NUP107, NUP98, NUP85, NUP43, NUP37, SEH1 and SEC13. Component of the GATOR2 subcomplex, composed of MIOS, SEC13, SEH1L, WDR24 and WDR59. The GATOR2 complex interacts with CASTOR1 and CASTOR2; the interaction is negatively regulated by arginine. The GATOR2 complex interacts with SESN1, SESN2 and SESN3; the interaction is negatively regulated by amino acids.

Its subcellular location is the chromosome. It is found in the centromere. It localises to the kinetochore. The protein resides in the nucleus. The protein localises to the nuclear pore complex. Its subcellular location is the lysosome membrane. With respect to regulation, the GATOR2 complex is negatively regulated by the upstream amino acid sensors CASTOR1 and SESN2, which sequester the GATOR2 complex in absence of amino acids. In the presence of abundant amino acids, GATOR2 is released from CASTOR1 and SESN2 and activated. Its function is as follows. Component of the Nup107-160 subcomplex of the nuclear pore complex (NPC). The Nup107-160 subcomplex is required for the assembly of a functional NPC. The Nup107-160 subcomplex is also required for normal kinetochore microtubule attachment, mitotic progression and chromosome segregation. This subunit plays a role in recruitment of the Nup107-160 subcomplex to the kinetochore. Functionally, as a component of the GATOR2 complex, functions as an activator of the amino acid-sensing branch of the mTORC1 signaling pathway. The GATOR2 complex indirectly activates mTORC1 through the inhibition of the GATOR1 subcomplex. GATOR2 probably acts as an E3 ubiquitin-protein ligase toward GATOR1. In the presence of abundant amino acids, the GATOR2 complex mediates ubiquitination of the NPRL2 core component of the GATOR1 complex, leading to GATOR1 inactivation. In the absence of amino acids, GATOR2 is inhibited, activating the GATOR1 complex. This Xenopus tropicalis (Western clawed frog) protein is Nucleoporin SEH1 (seh1l).